Here is a 74-residue protein sequence, read N- to C-terminus: Omega-conotoxin-like protein 1 (74 aa).

The signal sequence occupies residues 1 to 20; the sequence is MSKFILLVCILLLTTNIVSA. Intrachain disulfides connect C24-C38, C31-C43, and C37-C50.

Highly expressed in brain. Is also found in hemolymph.

The impact of this protein on the neuronal activity of the honeybee brain is not known. It does not affect apparent movement or hatching of blowfly larvae. However, when injected into fish, it induces a strong reversible paralytic effect. In addition, the presence of this small peptide in the hemolymph of adult drones together with its induction after bacterial infection suggests that this peptide exhibits antibacterial activity. This peptide may act by inhibiting ion channels. The sequence is that of Omega-conotoxin-like protein 1 from Apis mellifera (Honeybee).